The following is a 263-amino-acid chain: uncharacterized protein (263 aa).

Residues 44–131 (QVYSLGTPNG…YLADKFNHLI (88 aa)) form the GST N-terminal domain. The GST C-terminal domain maps to 134–263 (DWAQRTEVLN…ALEVDYKAIK (130 aa)).

The protein belongs to the GST superfamily. Homodimer.

This is an uncharacterized protein from Streptococcus mutans serotype c (strain ATCC 700610 / UA159).